The primary structure comprises 379 residues: Protein RecA (379 aa).

79 to 86 (GPESSGKT) lines the ATP pocket.

It belongs to the RecA family.

It is found in the cytoplasm. Functionally, can catalyze the hydrolysis of ATP in the presence of single-stranded DNA, the ATP-dependent uptake of single-stranded DNA by duplex DNA, and the ATP-dependent hybridization of homologous single-stranded DNAs. It interacts with LexA causing its activation and leading to its autocatalytic cleavage. This Streptococcus uberis (strain ATCC BAA-854 / 0140J) protein is Protein RecA.